Consider the following 930-residue polypeptide: Protocadherin gamma-B6 (930 aa).

The signal sequence occupies residues 1–30 (MGGSCAQRRRAGPRQVLFPLLLPLFYPTLS). Cadherin domains follow at residues 31-133 (EPIR…APQF), 134-242 (DKKE…PPVF), 243-347 (SRDE…SPEI), 348-452 (IITS…APVF), 453-562 (DQTS…APRV), and 570-675 (DGSA…LPDL). Over 31–691 (EPIRYSIPEE…SDPQAELQFY (661 aa)) the chain is Extracellular. Asparagine 304, asparagine 419, and asparagine 545 each carry an N-linked (GlcNAc...) asparagine glycan. A helical transmembrane segment spans residues 692 to 712 (LVVALALISVLFLLAVILAIA). At 713-930 (LRLRRSLSPA…KKKSGKKEKK (218 aa)) the chain is on the cytoplasmic side. Disordered regions lie at residues 791–839 (PHGG…WPNN) and 900–930 (ATLT…KEKK). Residues 800-839 (HPETLTSQAPPNTDWRFSQAQRPGTSGSQNGDDTGTWPNN) show a composition bias toward polar residues. The segment covering 920-930 (NKKKSGKKEKK) has biased composition (basic residues).

Its subcellular location is the cell membrane. In terms of biological role, potential calcium-dependent cell-adhesion protein. May be involved in the establishment and maintenance of specific neuronal connections in the brain. The polypeptide is Protocadherin gamma-B6 (PCDHGB6) (Homo sapiens (Human)).